The chain runs to 445 residues: Zinc finger protein SHOOT GRAVITROPISM 5 (445 aa).

Positions 22–31 are enriched in low complexity; that stretch reads SSSDPFLSSS. The disordered stretch occupies residues 22 to 59; it reads SSSDPFLSSSENGVTTTNTSTQKRKRRPAGTPDPDAEV. The segment covering 32 to 42 has biased composition (polar residues); that stretch reads ENGVTTTNTST. 3 consecutive C2H2-type zinc fingers follow at residues 73–95, 115–145, and 151–178; these read YICE…RRRH, YVCP…RRKH, and WVCE…TRGH. C153, C156, H169, C173, C180, C182, H195, and C199 together coordinate Zn(2+). A CCHC-type 2; atypical zinc finger spans residues 178–201; that stretch reads HSCDCGRVFSRVESFIEHQDNCSA. An SHR-binding region spans residues 188–200; that stretch reads RVESFIEHQDNCS. Disordered stretches follow at residues 203–253 and 281–314; these read RVHR…LEGR and SSNQ…LNLS. Residues 214–248 are compositionally biased toward polar residues; it reads TAVTVPACSSRTASTVSTPSSETNYGGTVAVTTPQ. Over residues 281–293 the composition is skewed to low complexity; sequence SSNQNPNQENQQQ. Residues 340–397 are a coiled coil; the sequence is MKIAMKEKAYAEEAKREAKRQREIAENEFANAKKIRQKAQAELERAKFLKEQSMKKIS.

As to expression, mainly expressed in the endodermis, the gravity-sensing tissue in inflorescence stems. Mostly present in stems and flowers, and, to a lower extent, in seedlings, hypocotyls, roots and the shoot apical meristem (SAM).

It is found in the nucleus. Transcription factor involved in inflorescence stems gravitropism, probably by regulating starch accumulation in amyloplasts of graviperceptive cells. Required for stem circumnutation movements. Regulates lateral organ morphogenesis and gravitropic responses. Acts cooperatively with IDD16 to control silique and branche orientation. Involved in the establishment of auxin gradients through the regulation of auxin biosynthesis and transport. The polypeptide is Zinc finger protein SHOOT GRAVITROPISM 5 (Arabidopsis thaliana (Mouse-ear cress)).